The following is a 365-amino-acid chain: MSQNLSAQNSSETPRIKVAIIYGGRSSEHSVSCVSAGAIMAHLDPQRYEVFPVGITHDGVWTVGESDPSRLKTVDRVMPEVQFTREVSLSVNPTTAGELCFEDGSLYAKVDVVFPVLHGRFGEDGTIQGLFELSGVPYVGTGVLSSACGMDKEFTKKLMAAEGLPVGKEVILRGSETLTEEHKRELGLPVFVKPARGGSSIGISRVADWSEWDAALSLAREHDSKVIVEAEIVGVEVECGVLERIDGSLMASVPAQLQDTDEGDEGFYGFDTKYLDDVVTAHIPAPFDAETTALIQELSLKAFTALSCRGLARVDFFVTDHGPVLNEINTMPGFTPISMYPQVFEATGIGYAQLLDNLIEQALHK.

In terms of domain architecture, ATP-grasp spans 156–360 (KKLMAAEGLP…YAQLLDNLIE (205 aa)). 183–238 (KRELGLPVFVKPARGGSSIGISRVADWSEWDAALSLAREHDSKVIVEAEIVGVEVE) is a binding site for ATP. 3 residues coordinate Mg(2+): aspartate 315, glutamate 327, and asparagine 329.

Belongs to the D-alanine--D-alanine ligase family. Mg(2+) serves as cofactor. Requires Mn(2+) as cofactor.

The protein resides in the cytoplasm. The catalysed reaction is 2 D-alanine + ATP = D-alanyl-D-alanine + ADP + phosphate + H(+). The protein operates within cell wall biogenesis; peptidoglycan biosynthesis. Functionally, cell wall formation. The polypeptide is D-alanine--D-alanine ligase (Corynebacterium diphtheriae (strain ATCC 700971 / NCTC 13129 / Biotype gravis)).